A 193-amino-acid polypeptide reads, in one-letter code: D-alanyl-D-alanine dipeptidase (193 aa).

His98 and Asp105 together coordinate Zn(2+). Glu162 acts as the Proton donor/acceptor in catalysis. A Zn(2+)-binding site is contributed by His165.

This sequence belongs to the peptidase M15D family. It depends on Zn(2+) as a cofactor.

It is found in the cytoplasm. The enzyme catalyses D-alanyl-D-alanine + H2O = 2 D-alanine. Catalyzes hydrolysis of the D-alanyl-D-alanine dipeptide. May have a role in cell-wall turnover. The protein is D-alanyl-D-alanine dipeptidase of Escherichia coli (strain K12).